A 122-amino-acid polypeptide reads, in one-letter code: Large ribosomal subunit protein uL14c (122 aa).

It belongs to the universal ribosomal protein uL14 family. Part of the 50S ribosomal subunit.

Its subcellular location is the plastid. The protein localises to the chloroplast. Its function is as follows. Binds to 23S rRNA. The protein is Large ribosomal subunit protein uL14c of Lemna minor (Common duckweed).